A 453-amino-acid chain; its full sequence is Tubulin beta-1 chain (453 aa).

Residues glutamine 12, glutamate 71, serine 140, glycine 144, threonine 145, glycine 146, asparagine 206, and asparagine 228 each contribute to the GTP site. A Mg(2+)-binding site is contributed by glutamate 71. A disordered region spans residues 431–453; it reads TADGVEGYEEEGYENDHPEDDEE. Residues 436–453 show a composition bias toward acidic residues; it reads EGYEEEGYENDHPEDDEE.

It belongs to the tubulin family. Dimer of alpha and beta chains. A typical microtubule is a hollow water-filled tube with an outer diameter of 25 nm and an inner diameter of 15 nM. Alpha-beta heterodimers associate head-to-tail to form protofilaments running lengthwise along the microtubule wall with the beta-tubulin subunit facing the microtubule plus end conferring a structural polarity. Microtubules usually have 13 protofilaments but different protofilament numbers can be found in some organisms and specialized cells. The cofactor is Mg(2+).

Its subcellular location is the cytoplasm. It localises to the cytoskeleton. In terms of biological role, tubulin is the major constituent of microtubules, a cylinder consisting of laterally associated linear protofilaments composed of alpha- and beta-tubulin heterodimers. Microtubules grow by the addition of GTP-tubulin dimers to the microtubule end, where a stabilizing cap forms. Below the cap, tubulin dimers are in GDP-bound state, owing to GTPase activity of alpha-tubulin. This chain is Tubulin beta-1 chain (TUBB), found in Chondrus crispus (Carrageen Irish moss).